We begin with the raw amino-acid sequence, 212 residues long: Hydroxyacylglutathione hydrolase GloC (212 aa).

Residues H55, H57, D59, H60, H132, D151, and H192 each contribute to the Zn(2+) site.

Belongs to the metallo-beta-lactamase superfamily. Glyoxalase II family. Requires Zn(2+) as cofactor.

The enzyme catalyses an S-(2-hydroxyacyl)glutathione + H2O = a 2-hydroxy carboxylate + glutathione + H(+). It catalyses the reaction (R)-S-lactoylglutathione + H2O = (R)-lactate + glutathione + H(+). It functions in the pathway secondary metabolite metabolism; methylglyoxal degradation; (R)-lactate from methylglyoxal: step 2/2. In terms of biological role, type II glyoxalase, isozyme of GloB, that hydrolyzes (R)-S-lactoylglutathione to (R)-lactate and glutathione. Plays a role in methylglyoxal (MG) detoxification. In Haemophilus influenzae (strain ATCC 51907 / DSM 11121 / KW20 / Rd), this protein is Hydroxyacylglutathione hydrolase GloC.